The primary structure comprises 216 residues: Imidazole glycerol phosphate synthase subunit HisH (216 aa).

The region spanning 5 to 213 is the Glutamine amidotransferase type-1 domain; it reads RLAVIDYDAG…VEFVARRLPA (209 aa). Cysteine 83 acts as the Nucleophile in catalysis. Active-site residues include histidine 188 and glutamate 190.

Heterodimer of HisH and HisF.

It localises to the cytoplasm. The catalysed reaction is 5-[(5-phospho-1-deoxy-D-ribulos-1-ylimino)methylamino]-1-(5-phospho-beta-D-ribosyl)imidazole-4-carboxamide + L-glutamine = D-erythro-1-(imidazol-4-yl)glycerol 3-phosphate + 5-amino-1-(5-phospho-beta-D-ribosyl)imidazole-4-carboxamide + L-glutamate + H(+). It carries out the reaction L-glutamine + H2O = L-glutamate + NH4(+). It functions in the pathway amino-acid biosynthesis; L-histidine biosynthesis; L-histidine from 5-phospho-alpha-D-ribose 1-diphosphate: step 5/9. In terms of biological role, IGPS catalyzes the conversion of PRFAR and glutamine to IGP, AICAR and glutamate. The HisH subunit catalyzes the hydrolysis of glutamine to glutamate and ammonia as part of the synthesis of IGP and AICAR. The resulting ammonia molecule is channeled to the active site of HisF. This Synechococcus sp. (strain JA-3-3Ab) (Cyanobacteria bacterium Yellowstone A-Prime) protein is Imidazole glycerol phosphate synthase subunit HisH.